Consider the following 140-residue polypeptide: Mercuric transport protein MerC (140 aa).

The Cytoplasmic portion of the chain corresponds to 2–10 (GLMTRIADK). A helical transmembrane segment spans residues 11 to 31 (TGALGSVVSAMGCAACFPALA). Positions 22 and 25 each coordinate Hg(2+). At 32–46 (SFGAAIGLGFLSQYE) the chain is on the periplasmic side. Residues 47-67 (GLFISRLLPLFAALAFLANAL) traverse the membrane as a helical segment. The Cytoplasmic segment spans residues 68-78 (GWFSHRQWLRS). A helical membrane pass occupies residues 79-99 (LLGMIGPAIVFAATVWLLGNW). Residues 100 to 106 (WTANLMY) are Periplasmic-facing. The chain crosses the membrane as a helical span at residues 107-127 (VGLALMIGVSIWDFVSPAHRR). The Cytoplasmic segment spans residues 128-140 (CGPDGCELPAKRL).

The protein resides in the cell inner membrane. Uptake of Hg(2+) is decreased by iodoacetamide and iodoacetate, and is completely inhibited by the thiol-modifying reagent N-ethylmaleimide (NEM). Functionally, involved in mercuric ion uptake and binding. MerC-mediated Hg(2+) uptake does not require MerP. This chain is Mercuric transport protein MerC, found in Shigella flexneri.